We begin with the raw amino-acid sequence, 107 residues long: Large ribosomal subunit protein uL24 (107 aa).

The protein belongs to the universal ribosomal protein uL24 family. As to quaternary structure, part of the 50S ribosomal subunit.

Its function is as follows. One of two assembly initiator proteins, it binds directly to the 5'-end of the 23S rRNA, where it nucleates assembly of the 50S subunit. One of the proteins that surrounds the polypeptide exit tunnel on the outside of the subunit. In Neisseria gonorrhoeae (strain ATCC 700825 / FA 1090), this protein is Large ribosomal subunit protein uL24.